Consider the following 499-residue polypeptide: Proline dehydrogenase 1, mitochondrial (499 aa).

The N-terminal 72 residues, 1-72, are a transit peptide targeting the mitochondrion; the sequence is MATRLLRTNF…LDLSDQARLF (72 aa).

It belongs to the proline oxidase family. It depends on FAD as a cofactor. As to expression, ubiquitous. Highest expression in pollen grains, in the stigma and in developing embryos.

It is found in the mitochondrion. The enzyme catalyses L-proline + a quinone = (S)-1-pyrroline-5-carboxylate + a quinol + H(+). It participates in amino-acid degradation; L-proline degradation into L-glutamate; L-glutamate from L-proline: step 1/2. Functionally, converts proline to delta-1-pyrroline-5-carboxylate. This Arabidopsis thaliana (Mouse-ear cress) protein is Proline dehydrogenase 1, mitochondrial (POX1).